The primary structure comprises 137 residues: Nucleoside diphosphate kinase (137 aa).

6 residues coordinate ATP: lysine 9, phenylalanine 57, arginine 85, threonine 91, arginine 102, and asparagine 112. Histidine 115 (pros-phosphohistidine intermediate) is an active-site residue.

It belongs to the NDK family. As to quaternary structure, homotetramer. Mg(2+) is required as a cofactor.

Its subcellular location is the cytoplasm. The enzyme catalyses a 2'-deoxyribonucleoside 5'-diphosphate + ATP = a 2'-deoxyribonucleoside 5'-triphosphate + ADP. It carries out the reaction a ribonucleoside 5'-diphosphate + ATP = a ribonucleoside 5'-triphosphate + ADP. Functionally, major role in the synthesis of nucleoside triphosphates other than ATP. The ATP gamma phosphate is transferred to the NDP beta phosphate via a ping-pong mechanism, using a phosphorylated active-site intermediate. In Campylobacter jejuni subsp. jejuni serotype O:6 (strain 81116 / NCTC 11828), this protein is Nucleoside diphosphate kinase.